The following is an 84-amino-acid chain: Putative regulatory protein Dde_2720 (84 aa).

Belongs to the RemA family.

This is Putative regulatory protein Dde_2720 from Oleidesulfovibrio alaskensis (strain ATCC BAA-1058 / DSM 17464 / G20) (Desulfovibrio alaskensis).